Here is a 246-residue protein sequence, read N- to C-terminus: Biosynthetic peptidoglycan transglycosylase (246 aa).

Residues Phe28–Pro48 form a helical membrane-spanning segment.

The protein belongs to the glycosyltransferase 51 family.

It is found in the cell inner membrane. The enzyme catalyses [GlcNAc-(1-&gt;4)-Mur2Ac(oyl-L-Ala-gamma-D-Glu-L-Lys-D-Ala-D-Ala)](n)-di-trans,octa-cis-undecaprenyl diphosphate + beta-D-GlcNAc-(1-&gt;4)-Mur2Ac(oyl-L-Ala-gamma-D-Glu-L-Lys-D-Ala-D-Ala)-di-trans,octa-cis-undecaprenyl diphosphate = [GlcNAc-(1-&gt;4)-Mur2Ac(oyl-L-Ala-gamma-D-Glu-L-Lys-D-Ala-D-Ala)](n+1)-di-trans,octa-cis-undecaprenyl diphosphate + di-trans,octa-cis-undecaprenyl diphosphate + H(+). It participates in cell wall biogenesis; peptidoglycan biosynthesis. Functionally, peptidoglycan polymerase that catalyzes glycan chain elongation from lipid-linked precursors. The chain is Biosynthetic peptidoglycan transglycosylase from Pasteurella multocida (strain Pm70).